A 247-amino-acid chain; its full sequence is uncharacterized protein (247 aa).

Transmembrane regions (helical) follow at residues 11–31 (LIAP…IYCV) and 39–59 (FIAI…TGLL).

It is found in the cell membrane. This is an uncharacterized protein from Haemophilus influenzae (strain ATCC 51907 / DSM 11121 / KW20 / Rd).